A 211-amino-acid polypeptide reads, in one-letter code: Ribosomal RNA small subunit methyltransferase G (211 aa).

S-adenosyl-L-methionine is bound by residues glycine 76, leucine 81, 127–128, and arginine 142; that span reads VE.

It belongs to the methyltransferase superfamily. RNA methyltransferase RsmG family.

Its subcellular location is the cytoplasm. It catalyses the reaction guanosine(527) in 16S rRNA + S-adenosyl-L-methionine = N(7)-methylguanosine(527) in 16S rRNA + S-adenosyl-L-homocysteine. In terms of biological role, specifically methylates the N7 position of guanine in position 527 of 16S rRNA. This chain is Ribosomal RNA small subunit methyltransferase G, found in Vibrio vulnificus (strain CMCP6).